The chain runs to 159 residues: Cystatin-9 (159 aa).

Positions 1 to 28 (MSSPQRRKAMPWALSLLLMGFQLLVTYA) are cleaved as a signal peptide.

This sequence belongs to the cystatin family. As to expression, expressed in heart, placenta, lung, liver, skeletal muscle and pancreas. Not expressed in brain. Expressed in epididymis, kidney, testis, spinal cord, and thymus with a strong expression in epididymis and kidney and a weak expression in the spinal cord and thymus.

The protein resides in the secreted. May be involved in testis development. May play a role in hematopoietic differentiation or inflammation. Has immunomodulatory and antimicrobial functions against Francisella tularensis, a Gram-negative bacteria. This is Cystatin-9 (CST9) from Homo sapiens (Human).